The primary structure comprises 198 residues: Ribonuclease HII (198 aa).

The RNase H type-2 domain occupies 14-198; sequence HMIVGVDEAG…FAPVAQLQLV (185 aa). Residues D20, E21, and D110 each contribute to the a divalent metal cation site.

Belongs to the RNase HII family. It depends on Mn(2+) as a cofactor. Requires Mg(2+) as cofactor.

Its subcellular location is the cytoplasm. The catalysed reaction is Endonucleolytic cleavage to 5'-phosphomonoester.. Its function is as follows. Endonuclease that specifically degrades the RNA of RNA-DNA hybrids. The polypeptide is Ribonuclease HII (Sphingopyxis alaskensis (strain DSM 13593 / LMG 18877 / RB2256) (Sphingomonas alaskensis)).